Reading from the N-terminus, the 467-residue chain is Metal transporter cnnm-4 (467 aa).

At 1–110 (MELYAAGRYD…EIPEGKDKTR (110 aa)) the chain is on the extracellular side. A glycan (N-linked (GlcNAc...) asparagine) is linked at Asn61. Residues 107–293 (DKTRVYFMMP…LEDEEAADGN (187 aa)) form the CNNM transmembrane domain. A helical transmembrane segment spans residues 111–131 (VYFMMPLLVLCLGLSATFSGL). At 132–170 (NLAIMSFSINDLKLIQESDSDKLMKQRAMDVMRLRRNSN) the chain is on the cytoplasmic side. The chain crosses the membrane as a helical span at residues 171–191 (FVLVTIIFGNCFCNISITLLM). At 192-196 (NYFAE) the chain is on the extracellular side. Residues 197-217 (FYGFGGFIFVELISTALLLIF) form a helical membrane-spanning segment. Topologically, residues 218–238 (TEILPSLIFTKNALAIASRLQ) are cytoplasmic. The helical transmembrane segment at 239–259 (YFVIFTMCITSPISYPLAMLL) threads the bilayer. Residues 260–467 (NIILGKENAD…IFDEKDARQE (208 aa)) are Extracellular-facing. CBS domains follow at residues 317-381 (MTEI…GSDT) and 394-461 (KRRK…IFDE). A glycan (N-linked (GlcNAc...) asparagine) is linked at Asn364.

Belongs to the ACDP family.

The protein localises to the cell membrane. In terms of biological role, probable metal transporter. Probably acts redundantly with the other metal transport proteins cnnm-1, cnnm-2, cnnm-3 and cnnm-5 to regulate Mg(2+) homeostasis. In Caenorhabditis elegans, this protein is Metal transporter cnnm-4.